Reading from the N-terminus, the 592-residue chain is Bifunctional purine biosynthesis protein ATIC (592 aa).

Met1 carries the post-translational modification N-acetylmethionine. Residues 1–146 enclose the MGS-like domain; the sequence is MAPSQLALFS…KNHARVTVVC (146 aa). The tract at residues 1 to 198 is IMP cyclohydrolase; sequence MAPSQLALFS…ISDYFRKQYS (198 aa). Residues 12-14, 34-37, 64-67, 101-102, and 125-126 contribute to the IMP site; these read SDK, SGGT, RVKT, CN, and DI. The active-site Proton donor/acceptor; for FAICAR cyclization activity is the Lys137. An N6-acetyllysine modification is found at Lys199. The AICAR formyltransferase stretch occupies residues 199-592; it reads KGISQMPLRY…AHTDLRLFHH (394 aa). 5-amino-1-(5-phospho-beta-D-ribosyl)imidazole-4-carboxamide contacts are provided by residues 207–208, His267, Gly316, Asp339, Asn431, and Arg451; that span reads RY. His267 (proton acceptor; for AICAR formyltransferase activity) is an active-site residue. Residue Ile452 coordinates (6R)-10-formyltetrahydrofolate. Phe541 lines the 5-amino-1-(5-phospho-beta-D-ribosyl)imidazole-4-carboxamide pocket. (6R)-10-formyltetrahydrofolate is bound by residues Asp546 and 565–566; that span reads ST. Arg588 lines the 5-amino-1-(5-phospho-beta-D-ribosyl)imidazole-4-carboxamide pocket.

This sequence belongs to the PurH family. Homodimer. Associates with internalized INSR complexes on Golgi/endosomal membranes. Interacts with INSR; ATIC together with PRKAA2/AMPK2 and HACD3/PTPLAD1 is proposed to be part of a signaling network regulating INSR autophosphorylation and endocytosis.

The protein resides in the cytoplasm. It is found in the cytosol. It catalyses the reaction (6R)-10-formyltetrahydrofolate + 5-amino-1-(5-phospho-beta-D-ribosyl)imidazole-4-carboxamide = 5-formamido-1-(5-phospho-D-ribosyl)imidazole-4-carboxamide + (6S)-5,6,7,8-tetrahydrofolate. The enzyme catalyses 10-formyldihydrofolate + 5-amino-1-(5-phospho-beta-D-ribosyl)imidazole-4-carboxamide = 5-formamido-1-(5-phospho-D-ribosyl)imidazole-4-carboxamide + 7,8-dihydrofolate. The catalysed reaction is IMP + H2O = 5-formamido-1-(5-phospho-D-ribosyl)imidazole-4-carboxamide. It participates in purine metabolism; IMP biosynthesis via de novo pathway; 5-formamido-1-(5-phospho-D-ribosyl)imidazole-4-carboxamide from 5-amino-1-(5-phospho-D-ribosyl)imidazole-4-carboxamide (10-formyl THF route): step 1/1. Its pathway is purine metabolism; IMP biosynthesis via de novo pathway; IMP from 5-formamido-1-(5-phospho-D-ribosyl)imidazole-4-carboxamide: step 1/1. AMP and XMP inhibit AICAR formyltransferase activity. AICAR formyltransferase activity is inhibited by N-(6-fluoro-1-oxo-1,2-dihydroisoquinolin-7-yl)-5- [(3R)-3-hydroxypyrrolidin-1-yl]thiophene-2-sulfonamide (LSN 3213128), which acts as a tumor suppression in cancer cell lines. Its function is as follows. Bifunctional enzyme that catalyzes the last two steps of purine biosynthesis. Acts as a transformylase that incorporates a formyl group to the AMP analog AICAR (5-amino-1-(5-phospho-beta-D-ribosyl)imidazole-4-carboxamide) to produce the intermediate formyl-AICAR (FAICAR). Also displays cyclohydrolase activity involving the cyclization of FAICAR to inosine monophosphate (IMP). Can use both 10-formyldihydrofolate and 10-formyltetrahydrofolate as the formyl donor in this reaction. Also catalyzes the cyclization of FAICAR to IMP. Promotes insulin receptor/INSR autophosphorylation and is involved in INSR internalization. The protein is Bifunctional purine biosynthesis protein ATIC (Atic) of Mus musculus (Mouse).